A 318-amino-acid polypeptide reads, in one-letter code: Ornithine carbamoyltransferase (318 aa).

Residues 63 to 66 (STRT), Gln90, Arg114, and 141 to 144 (HPCQ) each bind carbamoyl phosphate. L-ornithine contacts are provided by residues Asn172, Asp235, and 239 to 240 (SM). Carbamoyl phosphate-binding positions include 275 to 276 (CL) and Arg303.

This sequence belongs to the aspartate/ornithine carbamoyltransferase superfamily. OTCase family.

The protein localises to the cytoplasm. The enzyme catalyses carbamoyl phosphate + L-ornithine = L-citrulline + phosphate + H(+). The protein operates within amino-acid biosynthesis; L-arginine biosynthesis; L-arginine from L-ornithine and carbamoyl phosphate: step 1/3. Reversibly catalyzes the transfer of the carbamoyl group from carbamoyl phosphate (CP) to the N(epsilon) atom of ornithine (ORN) to produce L-citrulline. The sequence is that of Ornithine carbamoyltransferase from Prochlorococcus marinus (strain MIT 9313).